A 318-amino-acid chain; its full sequence is Probable cell division protein WhiA (318 aa).

Residues 281–314 (SLKELGEMLSPPVGKSGVNHRLRRIEKIAEELSK) constitute a DNA-binding region (H-T-H motif).

It belongs to the WhiA family.

Its function is as follows. Involved in cell division and chromosome segregation. The protein is Probable cell division protein WhiA of Clostridium tetani (strain Massachusetts / E88).